Here is a 349-residue protein sequence, read N- to C-terminus: Estrogen receptor (349 aa).

The segment at residues Tyr1–Met5 is a DNA-binding region (nuclear receptor). The tract at residues Tyr1–Thr38 is disordered. A compositionally biased stretch (basic residues) spans Lys12 to Arg24. One can recognise an NR LBD domain in the interval Thr65–His301. Positions Pro306–Pro327 are disordered.

It belongs to the nuclear hormone receptor family. NR3 subfamily. Binds DNA as a homodimer. Can form a heterodimer with ER-beta.

The protein resides in the nucleus. The steroid hormones and their receptors are involved in the regulation of eukaryotic gene expression and affect cellular proliferation and differentiation in target tissues. The chain is Estrogen receptor (ESR1) from Anolis carolinensis (Green anole).